A 204-amino-acid chain; its full sequence is Lymphotoxin-alpha (204 aa).

The N-terminal stretch at 1–33 (MTPPGRLYLRRVCSTPILLLLGLLLALPPEAQG) is a signal peptide. One can recognise a THD domain in the interval 62–204 (PAAHLVGDPS…SSVFFGAFAL (143 aa)). N-linked (GlcNAc...) asparagine glycosylation occurs at Asn95. Cys119 and Cys155 are disulfide-bonded.

It belongs to the tumor necrosis factor family. In terms of assembly, homotrimer, and heterotrimer of either two LTB and one LTA subunits or (less prevalent) two LTA and one LTB subunits. Interacts with TNFRSF14.

It is found in the secreted. It localises to the membrane. In terms of biological role, cytokine that in its homotrimeric form binds to TNFRSF1A/TNFR1, TNFRSF1B/TNFBR and TNFRSF14/HVEM. In its heterotrimeric form with LTB binds to TNFRSF3/LTBR. Lymphotoxin is produced by lymphocytes and is cytotoxic for a wide range of tumor cells in vitro and in vivo. This Sus scrofa (Pig) protein is Lymphotoxin-alpha (LTA).